The primary structure comprises 121 residues: Large ribosomal subunit protein uL18c (121 aa).

This sequence belongs to the universal ribosomal protein uL18 family. As to quaternary structure, part of the 50S ribosomal subunit; contacts the 5S rRNA.

It is found in the plastid. Its subcellular location is the cyanelle. In terms of biological role, binds 5S rRNA, forms part of the central protuberance of the 50S subunit. This Cyanophora paradoxa protein is Large ribosomal subunit protein uL18c (rpl18).